Here is a 247-residue protein sequence, read N- to C-terminus: tRNA (guanine-N(1)-)-methyltransferase (247 aa).

S-adenosyl-L-methionine is bound by residues Gly-112 and 132 to 137; that span reads IGDFVL.

Belongs to the RNA methyltransferase TrmD family. As to quaternary structure, homodimer.

It is found in the cytoplasm. The catalysed reaction is guanosine(37) in tRNA + S-adenosyl-L-methionine = N(1)-methylguanosine(37) in tRNA + S-adenosyl-L-homocysteine + H(+). Its function is as follows. Specifically methylates guanosine-37 in various tRNAs. This is tRNA (guanine-N(1)-)-methyltransferase from Geotalea uraniireducens (strain Rf4) (Geobacter uraniireducens).